Here is a 289-residue protein sequence, read N- to C-terminus: MPLTAESAAQQIQDRLKDIQQNIHNVDEERRRAENSIASLVRSLHATNQKVKPLLKASLTEAAQEEATIRAALAKIHEIRSIRNERRIQARNAGNKEAIRRGALMKMVQLSAQTLPLFVGKLGERAPALCGAIPAEGNYVAKVGDNVAALAKGIDEEENWILAEVVQFLHRQNKYDVIDIDEEQKDRHVLSKRKVIPLPLMRANPETDGHALFPKDTVVMALYPQTTCFYKAIVHRLPQTATEDYEVLFEDSSYTNGYAEPLPVAQRYVIAYRPTKKGAGSGSGNLSSA.

A coiled-coil region spans residues 9–36; sequence AQQIQDRLKDIQQNIHNVDEERRRAENS. The SGF29 C-terminal domain maps to 137–278; it reads GNYVAKVGDN…VIAYRPTKKG (142 aa). 2 histone H3K4me3 N-terminus binding regions span residues 179 to 181 and 225 to 228; these read DID and QTTC. A histone H3K4me3 binding region spans residues 249–251; sequence FED.

The protein belongs to the SGF29 family. As to quaternary structure, component of the Spt-Ada-Gcn5 acetyltransferase (SAGA) complex consisting of wda/Taf5L, Saf6, Taf9, Taf10b, Taf12, Ada1, Spt3, Spt7, Spt20, Sf3b3, Sf3b5, Nipped-A/Tra1, a histone acetyltransferase (HAT) module made up of Gcn5, Ada2b (Isoform B), Ada3 and Sgf29, and a deubiquitinase (DUB) module made up of not/nonstop, Sgf11, Atxn7 and e(y)2. Component of the Chiffon histone acetyltransferase (CHAT) complex consisting of Ada3, Sgf29, Gcn5, chif/chiffon and Ada2b (Isoform A).

The protein localises to the nucleus. Functionally, component of both the SAGA and CHAT histone acetyltransferase complexes, which both predominantly acetylate histone H3. This is SAGA-associated factor 29kDa from Drosophila melanogaster (Fruit fly).